Reading from the N-terminus, the 535-residue chain is Reticuline oxidase (535 aa).

Positions 1–23 are cleaved as a signal peptide; the sequence is MMCRSLTLRFFLFIVLLQTCVRG. N-linked (GlcNAc...) asparagine glycosylation occurs at Asn-42. The FAD-binding PCMH-type domain maps to 71–245; it reads TVSKPSFIVM…YAWKIKLLPV (175 aa). The segment at residues 108 to 170 is a cross-link (6-(S-cysteinyl)-8alpha-(pros-histidyl)-FAD (His-Cys)); that stretch reads HSYEGLSYTA…DTLGFTAGWC (63 aa). Asn-475 carries N-linked (GlcNAc...) asparagine glycosylation.

This sequence belongs to the oxygen-dependent FAD-linked oxidoreductase family. The cofactor is FAD. Requires a metal cation as cofactor. The FAD cofactor is bound via a bicovalent 6-S-cysteinyl, 8alpha-N1-histidyl FAD linkage. Expressed in roots and stems. Not detected in leaves or reproductive organs. Restricted to the parietal region of sieve elements adjacent or proximal to laticifers.

It localises to the cytoplasmic vesicle. It catalyses the reaction (S)-reticuline + O2 = (S)-scoulerine + H2O2 + H(+). The protein operates within alkaloid biosynthesis; (S)-scoulerine biosynthesis; (S)-scoulerine from (S)-reticuline: step 1/1. Its function is as follows. Oxygen-dependent FAD-dependent oxidoreductase essential to the formation of benzophenanthridine alkaloids in the response of plants to pathogenic attack. Catalyzes the stereospecific conversion of the N-methyl moiety of (S)-reticuline into the berberine bridge carbon of (S)-scoulerine. Involved in the biosynthesis of sanguinarine. This chain is Reticuline oxidase (BBE1), found in Papaver somniferum (Opium poppy).